A 163-amino-acid polypeptide reads, in one-letter code: 3-hydroxyacyl-[acyl-carrier-protein] dehydratase FabZ (163 aa).

The active site involves His58.

This sequence belongs to the thioester dehydratase family. FabZ subfamily.

It is found in the cytoplasm. It carries out the reaction a (3R)-hydroxyacyl-[ACP] = a (2E)-enoyl-[ACP] + H2O. Involved in unsaturated fatty acids biosynthesis. Catalyzes the dehydration of short chain beta-hydroxyacyl-ACPs and long chain saturated and unsaturated beta-hydroxyacyl-ACPs. The polypeptide is 3-hydroxyacyl-[acyl-carrier-protein] dehydratase FabZ (Francisella tularensis subsp. tularensis (strain FSC 198)).